A 411-amino-acid chain; its full sequence is Ubiquitin-binding protein CUE5 (411 aa).

The segment covering Met-1 to Leu-12 has biased composition (basic and acidic residues). 2 disordered regions span residues Met-1–Leu-102 and Glu-142–Met-411. A Glycyl lysine isopeptide (Lys-Gly) (interchain with G-Cter in ubiquitin) cross-link involves residue Lys-15. Residues Ser-21 and Ser-36 each carry the phosphoserine modification. The span at Asp-25–Asn-58 shows a compositional bias: basic and acidic residues. Lys-59 participates in a covalent cross-link: Glycyl lysine isopeptide (Lys-Gly) (interchain with G-Cter in ubiquitin). Thr-70 carries the post-translational modification Phosphothreonine. Lys-76 is covalently cross-linked (Glycyl lysine isopeptide (Lys-Gly) (interchain with G-Cter in ubiquitin)). Ser-91 bears the Phosphoserine mark. In terms of domain architecture, CUE spans Lys-97–Asp-140. Residue Lys-156 forms a Glycyl lysine isopeptide (Lys-Gly) (interchain with G-Cter in ubiquitin) linkage. Thr-167 carries the phosphothreonine modification. The span at Asn-209 to Asp-219 shows a compositional bias: basic and acidic residues. Position 220 is a phosphoserine (Ser-220). Residues Val-230–Gly-242 show a composition bias toward basic and acidic residues. The segment covering Leu-245 to Ile-256 has biased composition (polar residues). A phosphoserine mark is found at Ser-309 and Ser-318. Thr-346 carries the phosphothreonine modification. At Ser-348 the chain carries Phosphoserine. Phosphothreonine is present on Thr-352. Lys-354 is covalently cross-linked (Glycyl lysine isopeptide (Lys-Gly) (interchain with G-Cter in ubiquitin)). A phosphothreonine mark is found at Thr-364 and Thr-367. The AIM signature appears at Trp-373–Leu-376. Residue Lys-396 forms a Glycyl lysine isopeptide (Lys-Gly) (interchain with G-Cter in ubiquitin) linkage. A compositionally biased stretch (acidic residues) spans Asp-399–Met-411. The residue at position 407 (Ser-407) is a Phosphoserine.

Interacts with ATG8 (via AIM motif), CLB2, and ubiquitin (via CUE domain).

It localises to the cytoplasm. Connects the ubiquitin pathway to autophagy by functioning as a ubiquitin-ATG8 adapter and thus mediating autophagic clearance of ubiquitin conjugates under starvation conditions. The CUE5-dependent selective autophagy pathway plays an important role in clearance of cytotoxic protein aggregates. Not required for cytoplasmic to vacuole pathway (cvt), mitophagy, pexophagy, or ribophagy. The sequence is that of Ubiquitin-binding protein CUE5 from Saccharomyces cerevisiae (strain ATCC 204508 / S288c) (Baker's yeast).